Consider the following 404-residue polypeptide: SL1278 acyltransferase Chp1 (404 aa).

Residues 1–42 (MKCPGVSDCVATVRHDNVFAIAAGLRWSAAVPPLHKGDAVTK) lie on the Periplasmic side of the membrane. The helical transmembrane segment at 43 to 63 (LLVGAIAGGMLACAAILGDGI) threads the bilayer. Topologically, residues 64-404 (ASADTALIVP…RGLLPKGKKH (341 aa)) are cytoplasmic. The 222-residue stretch at 104–325 (PTATRHVVSY…LRPIIDRAYQ (222 aa)) folds into the PE-PPE domain.

Belongs to the mycobacterial PPE family.

The protein localises to the cell inner membrane. It carries out the reaction 3 3'-(hydroxy)phthioceranyl-2'-palmitoyl(stearoyl)-2-O-sulfo-alpha,alpha-trehalose = 3,6,6'-tris-(hydroxy)phthioceranyl-2-palmitoyl(stearoyl)-2'-sulfo-alpha-alpha-trehalose + 2 2'-palmitoyl/stearoyl-2-O-sulfo-alpha,alpha-trehalose.. With respect to regulation, activity is potentiated by the SL-1 transporter MmpL8. Inhibited by the lipase inhibitor tetrahydrolipstatin (THL). Its function is as follows. Involved in the final steps of the cell wall sulfolipid-1 (SL-1) biosynthesis. Catalyzes two successive acylations of the precursor 2-palmitoyl-3-(C43)-phthioceranyl-alpha, alpha'-D-trehalose-2'-sulfate (SL1278) to yield the tetraacylated sulfolipid SL-1. The polypeptide is SL1278 acyltransferase Chp1 (Mycobacterium tuberculosis (strain ATCC 25618 / H37Rv)).